The following is a 226-amino-acid chain: MYHIELKKEALLPRERLVDLGADRLSNQELLAILLRTGIKEKPVLEISTQILENISSLADFGQLSLQELQSIKGIGQVKSVEIKAMLELAKRIHKAEYDRKEQILSSEQLARKMMLELGDKKQEHLVAIYMDTQNRIIEQRTIFIGTVRRSVAEPREILHYACKNMATSLIIIHNHPSGSPKPSESDLSFTKKIKRSCDHLGIVCLDHIIVGKNKYYSFREEADIL.

The MPN domain maps to 103 to 225; the sequence is QILSSEQLAR…YYSFREEADI (123 aa). Positions 174, 176, and 187 each coordinate Zn(2+). The JAMM motif motif lies at 174–187; that stretch reads HNHPSGSPKPSESD.

The protein belongs to the UPF0758 family.

This is UPF0758 protein SAK_1186 from Streptococcus agalactiae serotype Ia (strain ATCC 27591 / A909 / CDC SS700).